A 479-amino-acid polypeptide reads, in one-letter code: RAC-gamma serine/threonine-protein kinase (479 aa).

S2 carries the N-acetylserine modification. Residues 5 to 107 enclose the PH domain; it reads TIVKEDWVQK…WTEAIQAVAD (103 aa). A disulfide bridge links C59 with C76. Residues 148–405 enclose the Protein kinase domain; it reads FDYLKLLGKG…PKEIMRHSFF (258 aa). Residues 154–162 and K177 each bind ATP; that span reads LGKGTFGKV. The active-site Proton acceptor is D271. The cysteines at positions 293 and 307 are disulfide-linked. An O-linked (GlcNAc) threonine glycan is attached at T302. Residue T305 is modified to Phosphothreonine; by PDPK1. O-linked (GlcNAc) threonine glycosylation is present at T309. Residues 406–479 form the AGC-kinase C-terminal domain; it reads SGVNWQDVYD…QFSYSASGRE (74 aa). The tract at residues 446–479 is disordered; sequence ITPPEKDDDDGMDCMDNERRPHFPQFSYSASGRE. T447 carries the phosphothreonine modification. Positions 451 to 460 are enriched in acidic residues; sequence KDDDDGMDCM. S472 is modified (phosphoserine; by PKC/PRKCZ). O-linked (GlcNAc) serine; alternate glycosylation is present at S472.

This sequence belongs to the protein kinase superfamily. AGC Ser/Thr protein kinase family. RAC subfamily. As to quaternary structure, interacts (via PH domain) with TCL1A; this enhances AKT3 phosphorylation and activation. Interacts with TRAF6. Interacts with KCTD20. Interacts with BTBD10. In terms of processing, phosphorylation on Thr-305 and Ser-472 is required for full activity. Phosphorylation of the activation loop at Thr-305 by PDPK1/PDK1 is a prerequisite for full activation. Phosphorylation at Ser-472 by mTORC2 in response to growth factors plays a key role in AKT1 activation by facilitating subsequent phosphorylation of the activation loop by PDPK1/PDK1. Post-translationally, ubiquitinated. When fully phosphorylated and translocated into the nucleus, undergoes 'Lys-48'-polyubiquitination catalyzed by TTC3, leading to its degradation by the proteasome. O-GlcNAcylation at Thr-302 and Thr-309 inhibits activating phosphorylation at Thr-305 via disrupting the interaction between AKT and PDPK1/PDK1.

It localises to the nucleus. The protein resides in the cytoplasm. It is found in the membrane. The catalysed reaction is L-seryl-[protein] + ATP = O-phospho-L-seryl-[protein] + ADP + H(+). The enzyme catalyses L-threonyl-[protein] + ATP = O-phospho-L-threonyl-[protein] + ADP + H(+). Two specific sites, one in the kinase domain (Thr-305) and the other in the C-terminal regulatory region (Ser-472), need to be phosphorylated for its full activation. IGF-1 leads to the activation of AKT3, which may play a role in regulating cell survival. Functionally, AKT3 is one of 3 closely related serine/threonine-protein kinases (AKT1, AKT2 and AKT3) called the AKT kinase, and which regulate many processes including metabolism, proliferation, cell survival, growth and angiogenesis. This is mediated through serine and/or threonine phosphorylation of a range of downstream substrates. Over 100 substrate candidates have been reported so far, but for most of them, no isoform specificity has been reported. AKT3 is the least studied AKT isoform. It plays an important role in brain development and is crucial for the viability of malignant glioma cells. AKT3 isoform may also be the key molecule in up-regulation and down-regulation of MMP13 via IL13. Required for the coordination of mitochondrial biogenesis with growth factor-induced increases in cellular energy demands. Down-regulation by RNA interference reduces the expression of the phosphorylated form of BAD, resulting in the induction of caspase-dependent apoptosis. The protein is RAC-gamma serine/threonine-protein kinase (Akt3) of Rattus norvegicus (Rat).